The sequence spans 611 residues: Dihydroxy-acid dehydratase (611 aa).

Asp-81 is a Mg(2+) binding site. Cys-122 provides a ligand contact to [2Fe-2S] cluster. The Mg(2+) site is built by Asp-123 and Lys-124. The residue at position 124 (Lys-124) is an N6-carboxylysine. A [2Fe-2S] cluster-binding site is contributed by Cys-195. Glu-491 provides a ligand contact to Mg(2+). Ser-517 serves as the catalytic Proton acceptor.

Belongs to the IlvD/Edd family. In terms of assembly, homodimer. It depends on [2Fe-2S] cluster as a cofactor. The cofactor is Mg(2+).

It carries out the reaction (2R)-2,3-dihydroxy-3-methylbutanoate = 3-methyl-2-oxobutanoate + H2O. The catalysed reaction is (2R,3R)-2,3-dihydroxy-3-methylpentanoate = (S)-3-methyl-2-oxopentanoate + H2O. Its pathway is amino-acid biosynthesis; L-isoleucine biosynthesis; L-isoleucine from 2-oxobutanoate: step 3/4. The protein operates within amino-acid biosynthesis; L-valine biosynthesis; L-valine from pyruvate: step 3/4. Its function is as follows. Functions in the biosynthesis of branched-chain amino acids. Catalyzes the dehydration of (2R,3R)-2,3-dihydroxy-3-methylpentanoate (2,3-dihydroxy-3-methylvalerate) into 2-oxo-3-methylpentanoate (2-oxo-3-methylvalerate) and of (2R)-2,3-dihydroxy-3-methylbutanoate (2,3-dihydroxyisovalerate) into 2-oxo-3-methylbutanoate (2-oxoisovalerate), the penultimate precursor to L-isoleucine and L-valine, respectively. This Histophilus somni (strain 129Pt) (Haemophilus somnus) protein is Dihydroxy-acid dehydratase.